The primary structure comprises 637 residues: Sodium-dependent proline transporter (637 aa).

At 1–45 (MKKLQEAHLRKPVTPDLLMTPSDQGDVDLDVDFAADRGNWTGKLD) the chain is on the cytoplasmic side. Position 20 is a phosphothreonine (threonine 20). Serine 22 bears the Phosphoserine mark. Transmembrane regions (helical) follow at residues 46-66 (FLLSCIGYCVGLGNVWRFPYR), 74-93 (AFLVPYFLMLAICGIPLFFL), and 117-137 (GAGAAMLLIVGLVAIYYNMII). The Extracellular portion of the chain corresponds to 138–214 (AYVLFYLFAS…QGIGRPGEIR (77 aa)). N-linked (GlcNAc...) asparagine glycosylation occurs at asparagine 182. 9 helical membrane-spanning segments follow: residues 215–233 (WNLCLCLLLAWVIVFLCIL), 242–259 (VVYFTATFPYLILLMLLV), 295–312 (IFYSLGVGFGGLLTFASY), 324–345 (FIVTLGNAITSILAGFAIFSVL), 378–397 (LPLSPFWSFLFFFMLLTLGL), 425–443 (VFSGLICVAMYLMGLILTT), 459–479 (SFGLMVVVITTCLAVTRVYGI), 500–519 (ACWLFLSPATLLALLVYSIV), and 538–556 (LGILMGLLSCLMIPAGMLV). Over 557–637 (AVLREEGSLW…IAEEEEESMM (81 aa)) the chain is Cytoplasmic. A phosphoserine mark is found at serine 573 and serine 582. Threonine 588 is modified (phosphothreonine). Tyrosine 591 is subject to Phosphotyrosine. Serine 598 and serine 600 each carry phosphoserine.

It belongs to the sodium:neurotransmitter symporter (SNF) (TC 2.A.22) family. SLC6A7 subfamily. As to expression, expressed in subpopulations of putative glutamatergic pathways of rat brain.

Its subcellular location is the synaptic cell membrane. The catalysed reaction is L-proline(out) + chloride(out) + 2 Na(+)(out) = L-proline(in) + chloride(in) + 2 Na(+)(in). It catalyses the reaction L-pipecolate(out) + chloride(out) + 2 Na(+)(out) = L-pipecolate(in) + chloride(in) + 2 Na(+)(in). Brain specific sodium (and chloride)-dependent proline transporter. Terminates the action of proline by its high affinity sodium-dependent reuptake into presynaptic terminals. This chain is Sodium-dependent proline transporter (Slc6a7), found in Rattus norvegicus (Rat).